We begin with the raw amino-acid sequence, 51 residues long: Basic phospholipase A2 homolog BmatTX-I (51 aa).

Residues Cys28 and Cys44 are joined by a disulfide bond.

In terms of assembly, monomer. In terms of tissue distribution, expressed by the venom gland.

Its subcellular location is the secreted. Functionally, snake venom phospholipase A2 homolog that lacks enzymatic activity. Shows high myotoxic activity, neutrophile activation (demonstrated by activation induction of IL-1beta production), slight cytotoxicity against Jurkat (leukemia T) and SK-BR-3 (breast adenocarcinoma) tumor cell lines, and slight antiparasitic activity against promastigote forms of Leishmania amazonensis. A model of myotoxic mechanism has been proposed: an apo Lys49-PLA2 is activated by the entrance of a hydrophobic molecule (e.g. fatty acid) at the hydrophobic channel of the protein leading to a reorientation of a monomer. This reorientation causes a transition between 'inactive' to 'active' states, causing alignment of C-terminal and membrane-docking sites (MDoS) side-by-side and putting the membrane-disruption sites (MDiS) in the same plane, exposed to solvent and in a symmetric position for both monomers. The MDoS region stabilizes the toxin on membrane by the interaction of charged residues with phospholipid head groups. Subsequently, the MDiS region destabilizes the membrane with penetration of hydrophobic residues. This insertion causes a disorganization of the membrane, allowing an uncontrolled influx of ions (i.e. calcium and sodium), and eventually triggering irreversible intracellular alterations and cell death. The sequence is that of Basic phospholipase A2 homolog BmatTX-I from Bothrops mattogrossensis (Pitviper).